The following is a 662-amino-acid chain: UvrABC system protein B (662 aa).

The 158-residue stretch at Lys25–Arg182 folds into the Helicase ATP-binding domain. Residue Gly38–Thr45 participates in ATP binding. A Beta-hairpin motif is present at residues Tyr91–Ile114. Residues Gln429–Ile595 form the Helicase C-terminal domain. The region spanning Asp622–Asp657 is the UVR domain.

It belongs to the UvrB family. As to quaternary structure, forms a heterotetramer with UvrA during the search for lesions. Interacts with UvrC in an incision complex.

The protein localises to the cytoplasm. Functionally, the UvrABC repair system catalyzes the recognition and processing of DNA lesions. A damage recognition complex composed of 2 UvrA and 2 UvrB subunits scans DNA for abnormalities. Upon binding of the UvrA(2)B(2) complex to a putative damaged site, the DNA wraps around one UvrB monomer. DNA wrap is dependent on ATP binding by UvrB and probably causes local melting of the DNA helix, facilitating insertion of UvrB beta-hairpin between the DNA strands. Then UvrB probes one DNA strand for the presence of a lesion. If a lesion is found the UvrA subunits dissociate and the UvrB-DNA preincision complex is formed. This complex is subsequently bound by UvrC and the second UvrB is released. If no lesion is found, the DNA wraps around the other UvrB subunit that will check the other stand for damage. The sequence is that of UvrABC system protein B from Clostridium botulinum (strain 657 / Type Ba4).